Consider the following 274-residue polypeptide: Type II restriction enzyme HgiBI (274 aa).

Belongs to the TdeIII type II restriction endonuclease family.

The catalysed reaction is Endonucleolytic cleavage of DNA to give specific double-stranded fragments with terminal 5'-phosphates.. In terms of biological role, a P subtype restriction enzyme that recognizes the double-stranded sequence 5'-GGWCC-3' and cleaves after G-1. This system is less active than isoschizomeric RM.HgiEI. The chain is Type II restriction enzyme HgiBI from Herpetosiphon aurantiacus (Herpetosiphon giganteus).